The primary structure comprises 273 residues: HTH-type transcriptional regulator NimR (273 aa).

One can recognise an HTH araC/xylS-type domain in the interval 158–258 (PKIRTMVEMM…GQTPGRYIAR (101 aa)). 2 DNA-binding regions (H-T-H motif) span residues 178–199 (GQWA…VKET) and 225–248 (VQKV…KKGL).

Negatively regulates expression of the nimT operon and its own expression. Acts by binding to the nimR-nimT intergenic region. This is HTH-type transcriptional regulator NimR from Escherichia coli (strain K12).